Reading from the N-terminus, the 152-residue chain is Transcriptional regulator MraZ (152 aa).

2 consecutive SpoVT-AbrB domains span residues 5–52 and 81–124; these read ATLV…PLPE and ASEC…DEQT.

The protein belongs to the MraZ family. As to quaternary structure, forms oligomers.

It localises to the cytoplasm. The protein resides in the nucleoid. In terms of biological role, negatively regulates its own expression and that of the subsequent genes in the proximal part of the division and cell wall (dcw) gene cluster. Acts by binding directly to DNA. May also regulate the expression of genes outside the dcw cluster. The chain is Transcriptional regulator MraZ from Pectobacterium carotovorum subsp. carotovorum (strain PC1).